The sequence spans 184 residues: UPF0340 protein TTE0860 (184 aa).

It belongs to the UPF0340 family.

The protein is UPF0340 protein TTE0860 of Caldanaerobacter subterraneus subsp. tengcongensis (strain DSM 15242 / JCM 11007 / NBRC 100824 / MB4) (Thermoanaerobacter tengcongensis).